The following is a 193-amino-acid chain: Holliday junction branch migration complex subunit RuvA (193 aa).

The tract at residues 1–63 (MIHHLKGQLI…EDSHTLYGFA (63 aa)) is domain I. The domain II stretch occupies residues 64-142 (EKSEREIFRL…KVLGDDEVFV (79 aa)). The flexible linker stretch occupies residues 143-145 (SQS). A domain III region spans residues 145 to 193 (SNTNKEEALSALEILGYNRRQAGKVVEKILKEDPESTVESIIKMALKKL).

It belongs to the RuvA family. As to quaternary structure, homotetramer. Forms an RuvA(8)-RuvB(12)-Holliday junction (HJ) complex. HJ DNA is sandwiched between 2 RuvA tetramers; dsDNA enters through RuvA and exits via RuvB. An RuvB hexamer assembles on each DNA strand where it exits the tetramer. Each RuvB hexamer is contacted by two RuvA subunits (via domain III) on 2 adjacent RuvB subunits; this complex drives branch migration. In the full resolvosome a probable DNA-RuvA(4)-RuvB(12)-RuvC(2) complex forms which resolves the HJ.

The protein localises to the cytoplasm. Functionally, the RuvA-RuvB-RuvC complex processes Holliday junction (HJ) DNA during genetic recombination and DNA repair, while the RuvA-RuvB complex plays an important role in the rescue of blocked DNA replication forks via replication fork reversal (RFR). RuvA specifically binds to HJ cruciform DNA, conferring on it an open structure. The RuvB hexamer acts as an ATP-dependent pump, pulling dsDNA into and through the RuvAB complex. HJ branch migration allows RuvC to scan DNA until it finds its consensus sequence, where it cleaves and resolves the cruciform DNA. This chain is Holliday junction branch migration complex subunit RuvA, found in Christiangramia forsetii (strain DSM 17595 / CGMCC 1.15422 / KT0803) (Gramella forsetii).